A 243-amino-acid chain; its full sequence is Pyridoxine 5'-phosphate synthase (243 aa).

Asn9 contacts 3-amino-2-oxopropyl phosphate. Position 11–12 (Asp11–His12) interacts with 1-deoxy-D-xylulose 5-phosphate. A 3-amino-2-oxopropyl phosphate-binding site is contributed by Arg20. His45 serves as the catalytic Proton acceptor. Positions 47 and 52 each coordinate 1-deoxy-D-xylulose 5-phosphate. The Proton acceptor role is filled by Glu72. A 1-deoxy-D-xylulose 5-phosphate-binding site is contributed by Thr102. Residue His193 is the Proton donor of the active site. Residues Gly194 and Gly215–His216 contribute to the 3-amino-2-oxopropyl phosphate site.

Belongs to the PNP synthase family. In terms of assembly, homooctamer; tetramer of dimers.

Its subcellular location is the cytoplasm. It catalyses the reaction 3-amino-2-oxopropyl phosphate + 1-deoxy-D-xylulose 5-phosphate = pyridoxine 5'-phosphate + phosphate + 2 H2O + H(+). Its pathway is cofactor biosynthesis; pyridoxine 5'-phosphate biosynthesis; pyridoxine 5'-phosphate from D-erythrose 4-phosphate: step 5/5. Functionally, catalyzes the complicated ring closure reaction between the two acyclic compounds 1-deoxy-D-xylulose-5-phosphate (DXP) and 3-amino-2-oxopropyl phosphate (1-amino-acetone-3-phosphate or AAP) to form pyridoxine 5'-phosphate (PNP) and inorganic phosphate. The chain is Pyridoxine 5'-phosphate synthase from Vibrio vulnificus (strain CMCP6).